Here is a 177-residue protein sequence, read N- to C-terminus: ATP synthase subunit delta (177 aa).

It belongs to the ATPase delta chain family. In terms of assembly, F-type ATPases have 2 components, F(1) - the catalytic core - and F(0) - the membrane proton channel. F(1) has five subunits: alpha(3), beta(3), gamma(1), delta(1), epsilon(1). F(0) has three main subunits: a(1), b(2) and c(10-14). The alpha and beta chains form an alternating ring which encloses part of the gamma chain. F(1) is attached to F(0) by a central stalk formed by the gamma and epsilon chains, while a peripheral stalk is formed by the delta and b chains.

The protein localises to the cell inner membrane. Functionally, f(1)F(0) ATP synthase produces ATP from ADP in the presence of a proton or sodium gradient. F-type ATPases consist of two structural domains, F(1) containing the extramembraneous catalytic core and F(0) containing the membrane proton channel, linked together by a central stalk and a peripheral stalk. During catalysis, ATP synthesis in the catalytic domain of F(1) is coupled via a rotary mechanism of the central stalk subunits to proton translocation. This protein is part of the stalk that links CF(0) to CF(1). It either transmits conformational changes from CF(0) to CF(1) or is implicated in proton conduction. This chain is ATP synthase subunit delta, found in Actinobacillus pleuropneumoniae serotype 7 (strain AP76).